We begin with the raw amino-acid sequence, 228 residues long: Ion-translocating oxidoreductase complex subunit E (228 aa).

Helical transmembrane passes span 24–44 (LLGL…LGLG), 73–93 (VFVL…NAFF), 95–115 (ELYL…AIIG), 130–150 (LADG…LGAL), and 184–204 (GFLL…LIAL).

The protein belongs to the NqrDE/RnfAE family. As to quaternary structure, the complex is composed of six subunits: RnfA, RnfB, RnfC, RnfD, RnfE and RnfG.

The protein resides in the cell inner membrane. In terms of biological role, part of a membrane-bound complex that couples electron transfer with translocation of ions across the membrane. This chain is Ion-translocating oxidoreductase complex subunit E, found in Thioalkalivibrio sulfidiphilus (strain HL-EbGR7).